The sequence spans 1528 residues: Intraflagellar transport protein 121 (1528 aa).

WD repeat units lie at residues 123–170, 244–285, 619–667, and 759–798; these read SNRA…GSAP, SSMP…SSVS, PSLT…SEFL, and PELI…REDS. Residues 914-933 are disordered; sequence DSGLDVTASNSSQPSTQTSQ. A compositionally biased stretch (low complexity) spans 920–933; that stretch reads TASNSSQPSTQTSQ.

The protein resides in the cell projection. Its subcellular location is the cilium. It localises to the flagellum. The protein localises to the cytoplasm. It is found in the cytoskeleton. The protein resides in the flagellum axoneme. Its subcellular location is the flagellum basal body. Component of the intraflagellar transport complex A (IFT-A) involved in flagellar assembly. This is Intraflagellar transport protein 121 from Giardia intestinalis (strain ATCC 50803 / WB clone C6) (Giardia lamblia).